We begin with the raw amino-acid sequence, 168 residues long: Ribosome-binding factor A (168 aa).

Residues 125-138 (RVREGAKHAGDSDP) show a composition bias toward basic and acidic residues. Residues 125–168 (RVREGAKHAGDSDPYRVLGEGDLEGPATGGPDVEDEGGANSHDR) form a disordered region.

It belongs to the RbfA family. Monomer. Binds 30S ribosomal subunits, but not 50S ribosomal subunits or 70S ribosomes.

It is found in the cytoplasm. One of several proteins that assist in the late maturation steps of the functional core of the 30S ribosomal subunit. Associates with free 30S ribosomal subunits (but not with 30S subunits that are part of 70S ribosomes or polysomes). Required for efficient processing of 16S rRNA. May interact with the 5'-terminal helix region of 16S rRNA. This is Ribosome-binding factor A from Mycolicibacterium gilvum (strain PYR-GCK) (Mycobacterium gilvum (strain PYR-GCK)).